We begin with the raw amino-acid sequence, 231 residues long: LexA repressor (231 aa).

Positions 31-51 (RAEIATEFGFRSANAAEEHLQ) form a DNA-binding region, H-T-H motif. Catalysis depends on for autocatalytic cleavage activity residues Ser-148 and Lys-185.

Belongs to the peptidase S24 family. As to quaternary structure, homodimer.

It catalyses the reaction Hydrolysis of Ala-|-Gly bond in repressor LexA.. Represses a number of genes involved in the response to DNA damage (SOS response), including recA and lexA. In the presence of single-stranded DNA, RecA interacts with LexA causing an autocatalytic cleavage which disrupts the DNA-binding part of LexA, leading to derepression of the SOS regulon and eventually DNA repair. This is LexA repressor from Leptothrix cholodnii (strain ATCC 51168 / LMG 8142 / SP-6) (Leptothrix discophora (strain SP-6)).